The primary structure comprises 149 residues: MWPPKHAHIGWLSSLALVVLLMSLQMVMVSGIECYVCDTSDTEHPFQCGEWFERYDIPDIQPQNCSSVHGAQFCVKHVGRFEGGIGAKRFCSSKDMGNYCDYVRNKGDRMDYRSCIYTCDTDGCNAAGRLELEWGVAAALLTLTWLLRH.

The N-terminal stretch at 1–31 (MWPPKHAHIGWLSSLALVVLLMSLQMVMVSG) is a signal peptide. Residues 32–126 (IECYVCDTSD…YTCDTDGCNA (95 aa)) are Extracellular-facing. Intrachain disulfides connect cysteine 34–cysteine 74, cysteine 37–cysteine 48, cysteine 65–cysteine 91, cysteine 100–cysteine 115, and cysteine 119–cysteine 124. N-linked (GlcNAc...) asparagine glycosylation occurs at asparagine 64. Asparagine 125 is lipidated: GPI-anchor amidated asparagine. Residues 126–149 (AAGRLELEWGVAAALLTLTWLLRH) constitute a propeptide, removed in mature form. A helical membrane pass occupies residues 127 to 147 (AGRLELEWGVAAALLTLTWLL). Residues 148-149 (RH) are Cytoplasmic-facing.

In terms of processing, GPI-anchored.

It is found in the cell membrane. It localises to the cell junction. Its subcellular location is the septate junction. The protein localises to the cytoplasm. The protein resides in the cell cortex. It is found in the secreted. It localises to the apicolateral cell membrane. Functionally, involved in tracheal paracellular barrier functions mediated by epithelial cell septate junctions. Involved in paracellular barrier functions mediated by glial cell septate junctions in the peripheral nervous system, including the chordotonal organs, but not the hemolymph-brain barrier (the insect blood-brain barrier) of the central nervous system. Required for septate junction assembly, possibly by organizing the preassembly and transport of septate junction proteins such as dlg1/disks large 1, Nrx-IV/Neurexin-IV and the claudin protein kune. Involved in chitin fiber organization during tracheal development. Secreted, possibly in association with extracellular vesicles, to act non-autonomously on tissues distant from its site of expression. The chain is UPAR/Ly6 domain-containing protein bou from Drosophila melanogaster (Fruit fly).